We begin with the raw amino-acid sequence, 317 residues long: Glycine--tRNA ligase alpha subunit (317 aa).

It belongs to the class-II aminoacyl-tRNA synthetase family. Tetramer of two alpha and two beta subunits.

The protein localises to the cytoplasm. The enzyme catalyses tRNA(Gly) + glycine + ATP = glycyl-tRNA(Gly) + AMP + diphosphate. This is Glycine--tRNA ligase alpha subunit from Pseudomonas fluorescens (strain SBW25).